Reading from the N-terminus, the 544-residue chain is Chaperonin GroEL 2 (544 aa).

Residues 29–32 (TLGP), 86–90 (DGTTT), Gly413, and Asp495 contribute to the ATP site. Residues 525–544 (PEPKSNKPAGGGGGVDDYDY) are disordered. Residues 533-544 (AGGGGGVDDYDY) show a composition bias toward gly residues.

This sequence belongs to the chaperonin (HSP60) family. In terms of assembly, forms a cylinder of 14 subunits composed of two heptameric rings stacked back-to-back. Interacts with the co-chaperonin GroES.

The protein resides in the cytoplasm. It carries out the reaction ATP + H2O + a folded polypeptide = ADP + phosphate + an unfolded polypeptide.. In terms of biological role, together with its co-chaperonin GroES, plays an essential role in assisting protein folding. The GroEL-GroES system forms a nano-cage that allows encapsulation of the non-native substrate proteins and provides a physical environment optimized to promote and accelerate protein folding. The chain is Chaperonin GroEL 2 from Synechococcus sp. (strain JA-3-3Ab) (Cyanobacteria bacterium Yellowstone A-Prime).